Reading from the N-terminus, the 426-residue chain is Multifunctional protein ADE2 (426 aa).

An SAICAR synthetase region spans residues 1-261 (MAPAASELKL…WVAERVELLL (261 aa)). The AIR carboxylase stretch occupies residues 262–426 (KTKSQGRVVV…ADKKLRECTL (165 aa)).

The protein in the N-terminal section; belongs to the SAICAR synthetase family. In the C-terminal section; belongs to the AIR carboxylase family. Class II subfamily. As to quaternary structure, homooctamer.

It carries out the reaction 5-amino-1-(5-phospho-D-ribosyl)imidazole-4-carboxylate + L-aspartate + ATP = (2S)-2-[5-amino-1-(5-phospho-beta-D-ribosyl)imidazole-4-carboxamido]succinate + ADP + phosphate + 2 H(+). It catalyses the reaction 5-amino-1-(5-phospho-D-ribosyl)imidazole-4-carboxylate + H(+) = 5-amino-1-(5-phospho-beta-D-ribosyl)imidazole + CO2. The protein operates within purine metabolism; IMP biosynthesis via de novo pathway; 5-amino-1-(5-phospho-D-ribosyl)imidazole-4-carboxamide from 5-amino-1-(5-phospho-D-ribosyl)imidazole-4-carboxylate: step 1/2. It participates in purine metabolism; IMP biosynthesis via de novo pathway; 5-amino-1-(5-phospho-D-ribosyl)imidazole-4-carboxylate from 5-amino-1-(5-phospho-D-ribosyl)imidazole (carboxylase route): step 1/1. The sequence is that of Multifunctional protein ADE2 (AIRC) from Gallus gallus (Chicken).